Here is a 217-residue protein sequence, read N- to C-terminus: 3,4-dihydroxy-2-butanone 4-phosphate synthase (217 aa).

D-ribulose 5-phosphate contacts are provided by residues Arg-37–Glu-38, Asp-42, Arg-150–Thr-154, and Glu-174. Glu-38 is a binding site for Mg(2+). His-153 lines the Mg(2+) pocket.

Belongs to the DHBP synthase family. In terms of assembly, homodimer. Requires Mg(2+) as cofactor. It depends on Mn(2+) as a cofactor.

It carries out the reaction D-ribulose 5-phosphate = (2S)-2-hydroxy-3-oxobutyl phosphate + formate + H(+). The protein operates within cofactor biosynthesis; riboflavin biosynthesis; 2-hydroxy-3-oxobutyl phosphate from D-ribulose 5-phosphate: step 1/1. Catalyzes the conversion of D-ribulose 5-phosphate to formate and 3,4-dihydroxy-2-butanone 4-phosphate. This Salmonella paratyphi A (strain ATCC 9150 / SARB42) protein is 3,4-dihydroxy-2-butanone 4-phosphate synthase.